Here is a 61-residue protein sequence, read N- to C-terminus: Sec-independent protein translocase protein TatA (61 aa).

A helical transmembrane segment spans residues 1-21; it reads MFSNIGFPGLILILVAVLILF.

This sequence belongs to the TatA/E family. In terms of assembly, forms a complex with TatC.

The protein resides in the cell membrane. Part of the twin-arginine translocation (Tat) system that transports large folded proteins containing a characteristic twin-arginine motif in their signal peptide across membranes. TatA could form the protein-conducting channel of the Tat system. The polypeptide is Sec-independent protein translocase protein TatA (Bacillus anthracis (strain A0248)).